A 305-amino-acid polypeptide reads, in one-letter code: Polyamine aminopropyltransferase 2 (305 aa).

One can recognise a PABS domain in the interval 7 to 242 (WRFVAEWTSE…GLWGFVAASD (236 aa)). Q36 contributes to the S-methyl-5'-thioadenosine binding site. The spermidine site is built by H67 and E91. S-methyl-5'-thioadenosine-binding positions include D111 and 143 to 144 (DG). The Proton acceptor role is filled by D161. S-methyl-5'-thioadenosine is bound at residue P170.

This sequence belongs to the spermidine/spermine synthase family. Homodimer or homotetramer.

It is found in the cytoplasm. It catalyses the reaction S-adenosyl 3-(methylsulfanyl)propylamine + propane-1,3-diamine = norspermidine + S-methyl-5'-thioadenosine + H(+). Its function is as follows. Involved in the biosynthesis of polyamines which are thought to support the growth of thermophilic microorganisms under high-temperature conditions. It seems that long-chain and branched-chain of polyamines effectively stabilize DNA and RNA, respectively. Catalyzes the irreversible transfer of a propylamine group from the amino donor S-adenosylmethioninamine (decarboxy-AdoMet) to 1,3-diaminopropane to yield sym-norspermidine (bis(3-aminopropyl)amine). It can also synthesize thermospermine from spermidine with a very low activity. The chain is Polyamine aminopropyltransferase 2 from Hyperthermus butylicus (strain DSM 5456 / JCM 9403 / PLM1-5).